Reading from the N-terminus, the 110-residue chain is Iron-sulfur cluster assembly protein CyaY (110 aa).

It belongs to the frataxin family.

In terms of biological role, involved in iron-sulfur (Fe-S) cluster assembly. May act as a regulator of Fe-S biogenesis. The sequence is that of Iron-sulfur cluster assembly protein CyaY from Pseudomonas putida (strain ATCC 700007 / DSM 6899 / JCM 31910 / BCRC 17059 / LMG 24140 / F1).